The chain runs to 184 residues: Dual-action ribosomal maturation protein DarP (184 aa).

Residues 1–21 (MYKHPDEEWLDEIPGQQENED) are disordered.

This sequence belongs to the DarP family.

The protein resides in the cytoplasm. Functionally, member of a network of 50S ribosomal subunit biogenesis factors which assembles along the 30S-50S interface, preventing incorrect 23S rRNA structures from forming. Promotes peptidyl transferase center (PTC) maturation. The polypeptide is Dual-action ribosomal maturation protein DarP (Edwardsiella ictaluri (strain 93-146)).